Reading from the N-terminus, the 214-residue chain is A-type ATP synthase subunit D (214 aa).

This sequence belongs to the V-ATPase D subunit family. Has multiple subunits with at least A(3), B(3), C, D, E, F, H, I and proteolipid K(x).

The protein resides in the cell membrane. Component of the A-type ATP synthase that produces ATP from ADP in the presence of a proton gradient across the membrane. The protein is A-type ATP synthase subunit D of Pyrococcus horikoshii (strain ATCC 700860 / DSM 12428 / JCM 9974 / NBRC 100139 / OT-3).